The chain runs to 1541 residues: WD repeat-containing protein 62 (1541 aa).

An N-acetylalanine modification is found at A2. The residue at position 33 (S33) is a Phosphoserine. A Phosphothreonine modification is found at T46. 12 WD repeats span residues 109-150, 153-194, 196-234, 291-330, 357-396, 402-450, 490-529, 532-574, 578-618, 626-665, 671-713, and 714-752; these read TARK…QVAE, GHKY…VVAS, KVSC…EAKV, INLK…YLAN, AVYP…KVGK, FHSS…DSHW, DMKA…ELVR, AHDA…SLEQ, DHSS…DGLH, AEKT…QKKC, GDEG…KMFG, and HSEI…TNCM. S501 bears the Phosphoserine mark. Disordered stretches follow at residues 762–820 and 911–1050; these read REQP…KESL and LSQS…LPQT. Basic and acidic residues predominate over residues 770-780; it reads KDGKWSRDPRQ. Polar residues predominate over residues 781–795; that stretch reads ETCTSMPSEISLSPG. Residues 797 to 809 are compositionally biased toward acidic residues; the sequence is QTEDELEEECEPE. A WD 13 repeat occupies 803 to 846; it reads EEECEPEELLKTPSKESLDSDPRCLLTNGKLPLWAKRLLGDDDV. Over residues 810–820 the composition is skewed to basic and acidic residues; that stretch reads ELLKTPSKESL. Residues 937–948 are compositionally biased toward low complexity; that stretch reads VSELLCSLESEV. S943 carries the post-translational modification Phosphoserine. Positions 1008–1026 are enriched in pro residues; sequence PPRPDPDPPFDVAVPPAPG. A Phosphothreonine modification is found at T1050. A phosphoserine mark is found at S1095, S1125, and S1151. Disordered stretches follow at residues 1133-1153 and 1185-1212; these read LAGS…TSPG and SSSS…QGVH. One copy of the WD 14 repeat lies at 1138–1180; the sequence is PRAEPLRAGTGYTSPGRTNVLSAGKAEEPLEAWSPLTSCLTGL. Positions 1193–1202 are enriched in pro residues; that stretch reads DKTPPTPTAL. Phosphoserine occurs at positions 1235, 1255, and 1256. The interval 1273 to 1293 is disordered; the sequence is TVTPSSDSEGQEPALPSRGNH. T1275 is modified (phosphothreonine).

As to quaternary structure, can form homodimers (via C-terminus). Interacts (via C-terminus) with MAPKBP1 (via C-terminus). Interacts with CDK5RAP2, CEP152, CEP63 and KIAA0753. CEP63, CDK5RAP2, CEP152, WDR62 are proposed to form a stepwise assembled complex at the centrosome forming a ring near parental centrioles.

Its subcellular location is the nucleus. It is found in the cytoplasm. The protein resides in the cytoskeleton. It localises to the spindle pole. The protein localises to the microtubule organizing center. Its subcellular location is the centrosome. It is found in the centriole. Its function is as follows. Required for cerebral cortical development. Plays a role in neuronal proliferation and migration. Plays a role in mother-centriole-dependent centriole duplication; the function seems also to involve CEP152, CDK5RAP2 and CEP63 through a stepwise assembled complex at the centrosome that recruits CDK2 required for centriole duplication. The protein is WD repeat-containing protein 62 (WDR62) of Sus scrofa (Pig).